The sequence spans 211 residues: Superoxide dismutase [Mn], mitochondrial (211 aa).

Residues 1-24 (MLCRAVCSASRRLAPALGILGVRQ) constitute a mitochondrion transit peptide. Mn(2+) is bound at residue histidine 50. Position 58 is a 3'-nitrotyrosine (tyrosine 58). 2 positions are modified to N6-acetyllysine; alternate: lysine 68 and lysine 75. Lysine 68 and lysine 75 each carry N6-succinyllysine; alternate. Histidine 98 provides a ligand contact to Mn(2+). At lysine 114 the chain carries N6-acetyllysine. N6-acetyllysine; alternate occurs at positions 122 and 130. N6-succinyllysine; alternate is present on residues lysine 122 and lysine 130. Positions 183 and 187 each coordinate Mn(2+). Lysine 202 is subject to N6-acetyllysine.

This sequence belongs to the iron/manganese superoxide dismutase family. In terms of assembly, homotetramer. The cofactor is Mn(2+). In terms of processing, nitrated under oxidative stress. Nitration coupled with oxidation inhibits the catalytic activity. Acetylation at Lys-122 decreases enzymatic activity. Deacetylated by SIRT3 upon exposure to ionizing radiations or after long fasting. Post-translationally, polyubiquitinated; leading to proteasomal degradation. Deubiquitinated by USP36 which increases protein stability.

The protein resides in the mitochondrion matrix. The enzyme catalyses 2 superoxide + 2 H(+) = H2O2 + O2. Destroys superoxide anion radicals which are normally produced within the cells and which are toxic to biological systems. The polypeptide is Superoxide dismutase [Mn], mitochondrial (SOD2) (Cavia porcellus (Guinea pig)).